A 266-amino-acid polypeptide reads, in one-letter code: UPF0354 protein lwe1624 (266 aa).

It belongs to the UPF0354 family.

The polypeptide is UPF0354 protein lwe1624 (Listeria welshimeri serovar 6b (strain ATCC 35897 / DSM 20650 / CCUG 15529 / CIP 8149 / NCTC 11857 / SLCC 5334 / V8)).